The following is a 306-amino-acid chain: Natural cytotoxicity triggering receptor 1 (306 aa).

A signal peptide spans 1–21 (MSSTLRALLCLGLCLSQRISA). The Extracellular portion of the chain corresponds to 22–257 (PKQTLPKPII…WDHTAQNLLR (236 aa)). 2 Ig-like domains span residues 42–100 (EKQA…SCIY) and 137–192 (GEKV…RCFG). Disulfide bonds link C49-C98 and C144-C190. Residue N216 is glycosylated (N-linked (GlcNAc...) asparagine). The helical transmembrane segment at 258-278 (MGLAFLVLVALVCLLVEDWLS) threads the bilayer. Residues 279-306 (RKRTREQASRASTWEGRRRLNKHKDSEE) are Cytoplasmic-facing.

This sequence belongs to the natural cytotoxicity receptor (NCR) family. As to quaternary structure, interacts with CD3Z and FCER1G. As to expression, expressed in NK cells.

Its subcellular location is the cell membrane. Its function is as follows. Cytotoxicity-activating receptor that may contribute to the increased efficiency of activated natural killer (NK) cells to mediate tumor cell lysis. The sequence is that of Natural cytotoxicity triggering receptor 1 (NCR1) from Macaca fascicularis (Crab-eating macaque).